A 477-amino-acid chain; its full sequence is Glycogen synthase (477 aa).

Position 15 (K15) interacts with ADP-alpha-D-glucose.

Belongs to the glycosyltransferase 1 family. Bacterial/plant glycogen synthase subfamily.

The catalysed reaction is [(1-&gt;4)-alpha-D-glucosyl](n) + ADP-alpha-D-glucose = [(1-&gt;4)-alpha-D-glucosyl](n+1) + ADP + H(+). It participates in glycan biosynthesis; glycogen biosynthesis. Synthesizes alpha-1,4-glucan chains using ADP-glucose. This Streptococcus pneumoniae (strain JJA) protein is Glycogen synthase.